A 499-amino-acid polypeptide reads, in one-letter code: Proline--tRNA ligase (499 aa).

The protein belongs to the class-II aminoacyl-tRNA synthetase family. ProS type 3 subfamily. In terms of assembly, homodimer.

The protein localises to the cytoplasm. The catalysed reaction is tRNA(Pro) + L-proline + ATP = L-prolyl-tRNA(Pro) + AMP + diphosphate. Functionally, catalyzes the attachment of proline to tRNA(Pro) in a two-step reaction: proline is first activated by ATP to form Pro-AMP and then transferred to the acceptor end of tRNA(Pro). The protein is Proline--tRNA ligase of Bdellovibrio bacteriovorus (strain ATCC 15356 / DSM 50701 / NCIMB 9529 / HD100).